A 53-amino-acid polypeptide reads, in one-letter code: Mannose/glucose-specific lectin alpha 1 chain (53 aa).

It belongs to the leguminous lectin family. In terms of assembly, tetramer of two alpha and two beta chains.

The protein is Mannose/glucose-specific lectin alpha 1 chain of Lathyrus ochrus (Cyprus-vetch).